We begin with the raw amino-acid sequence, 475 residues long: Transmembrane protein 44 (475 aa).

The Extracellular portion of the chain corresponds to 1-29; sequence MGEAPSPAPALWDWDYLDRCFARHRVCIS. The chain crosses the membrane as a helical span at residues 30–50; it reads FGLWICASSCWIAAHALLLYL. Topologically, residues 51–61 are cytoplasmic; sequence RCAQKPRQDQS. The chain crosses the membrane as a helical span at residues 62–82; sequence ALCAACCLLTSLCDTVGALLA. The Extracellular portion of the chain corresponds to 83 to 88; the sequence is RQLTIQ. A helical transmembrane segment spans residues 89 to 109; sequence VFTGAYLAAIDLVNFMFILFP. Residues 110 to 135 are Cytoplasmic-facing; the sequence is VCGSKFKSNSDREARERKRRRQLRAS. A helical membrane pass occupies residues 136-156; that stretch reads VFALALPLSLGPCWALWVAVP. Residues 157–179 lie on the Extracellular side of the membrane; that stretch reads KASATIRGPQRRLLASLLQENTE. The helical transmembrane segment at 180-200 threads the bilayer; it reads ILGYLLGSVAAFGSWASRIPP. Residues 201 to 259 are Cytoplasmic-facing; sequence LSRIAPPPTLGITTQHEIWRGQMSKPSQSPSRSPSGHWRAAAQRQVLGTEMCRGKTFPS. A helical membrane pass occupies residues 260 to 280; sequence IHLWTRLLSALAGLLYASAIV. The Extracellular portion of the chain corresponds to 281 to 294; it reads AHDQHPEYLLRATP. A helical membrane pass occupies residues 295 to 315; the sequence is WFLTSLGRAALDLAIIFLSCV. The Cytoplasmic segment spans residues 316–475; sequence MKSKMRQALG…VRTAHLSDDD (160 aa). Positions 390-475 are disordered; that stretch reads SATRLPGDGQ…VRTAHLSDDD (86 aa). Low complexity predominate over residues 424–436; that stretch reads SSGSSSEVSSINS. A compositionally biased stretch (basic and acidic residues) spans 464–475; the sequence is DSVRTAHLSDDD. S465 carries the post-translational modification Phosphoserine.

The protein localises to the membrane. This is Transmembrane protein 44 (TMEM44) from Homo sapiens (Human).